The following is a 235-amino-acid chain: Purine nucleoside phosphorylase DeoD-type (235 aa).

Histidine 4 provides a ligand contact to a purine D-ribonucleoside. Residues glycine 20, arginine 24, arginine 43, and 87 to 90 each bind phosphate; that span reads RVGT. A purine D-ribonucleoside is bound by residues 179–181 and 203–204; these read EME and SD. Aspartate 204 functions as the Proton donor in the catalytic mechanism.

Belongs to the PNP/UDP phosphorylase family. Homohexamer; trimer of homodimers.

The catalysed reaction is a purine D-ribonucleoside + phosphate = a purine nucleobase + alpha-D-ribose 1-phosphate. It catalyses the reaction a purine 2'-deoxy-D-ribonucleoside + phosphate = a purine nucleobase + 2-deoxy-alpha-D-ribose 1-phosphate. Its function is as follows. Catalyzes the reversible phosphorolytic breakdown of the N-glycosidic bond in the beta-(deoxy)ribonucleoside molecules, with the formation of the corresponding free purine bases and pentose-1-phosphate. The polypeptide is Purine nucleoside phosphorylase DeoD-type (Brevibacillus brevis (strain 47 / JCM 6285 / NBRC 100599)).